The sequence spans 534 residues: EH domain-containing protein 1 (534 aa).

Residue M1 is modified to N-acetylmethionine. The Dynamin-type G domain occupies 55–286 (FDNKPMVLLV…DLFKDIQSLP (232 aa)). A G1 motif region spans residues 65-72 (GQYSTGKT). 65 to 72 (GQYSTGKT) serves as a coordination point for ATP. Residues 91 to 92 (EP) are G2 motif. Residues 153–156 (DTPG) form a G3 motif region. Residues 198–227 (DEFSEVIKALKNHEDKIRVVLNKADQIETQ) are a coiled coil. Positions 219–222 (NKAD) are G4 motif. Residue K220 coordinates ATP. A region of interest (G5 motif) is located at residue I243. Position 258 (W258) interacts with ATP. One can recognise an EH domain in the interval 444–532 (DKPTYDEIFY…PHLVPPSKRR (89 aa)). Phosphoserine is present on S456. The region spanning 476-511 (LPNTVLGKIWKLADVDRDGLLDDEEFALANHLIKVK) is the EF-hand domain. Ca(2+) contacts are provided by D489, D491, D493, and E500.

This sequence belongs to the TRAFAC class dynamin-like GTPase superfamily. Dynamin/Fzo/YdjA family. EHD subfamily. As to quaternary structure, homooligomer, and heterooligomer with EHD2, EHD3 and EHD4, ATP-binding is required for heterooligomerization. Interacts (via EH domain) with MICALL1 (via NPF1 motif); the interaction is direct and recruits EHD1 to membranes. Interacts with RAB35; the interaction is indirect through MICALL1 and recruits EHD1 to membranes. Interacts (via EH domain) with PACSIN2 (via NPF motifs); regulates localization to tubular recycling endosome membranes. Interacts with PACSIN1. Interacts with RAB8A. Interacts with FER1L5 (via second C2 domain). Interacts with MYOF. Interacts with ZFYVE20. Interacts (via EH domain) with RAB11FIP2.

Its subcellular location is the recycling endosome membrane. The protein resides in the early endosome membrane. It is found in the cell membrane. It localises to the cell projection. The protein localises to the cilium membrane. Its function is as follows. ATP- and membrane-binding protein that controls membrane reorganization/tubulation upon ATP hydrolysis. Acts in early endocytic membrane fusion and membrane trafficking of recycling endosomes. Recruited to endosomal membranes upon nerve growth factor stimulation, indirectly regulates neurite outgrowth. Plays a role in myoblast fusion. Involved in the unidirectional retrograde dendritic transport of endocytosed BACE1 and in efficient sorting of BACE1 to axons implicating a function in neuronal APP processing. Plays a role in the formation of the ciliary vesicle (CV), an early step in cilium biogenesis. Proposed to be required for the fusion of distal appendage vesicles (DAVs) to form the CV by recruiting SNARE complex component SNAP29. Is required for recruitment of transition zone proteins CEP290, RPGRIP1L, TMEM67 and B9D2, and of IFT20 following DAV reorganization before Rab8-dependent ciliary membrane extension. Required for the loss of CCP110 form the mother centriole essential for the maturation of the basal body during ciliogenesis. The protein is EH domain-containing protein 1 of Bos taurus (Bovine).